Here is a 1042-residue protein sequence, read N- to C-terminus: Isoleucine--tRNA ligase (1042 aa).

The short motif at 59 to 69 (PFANGLPHYGH) is the 'HIGH' region element. The short motif at 619-623 (KMSKS) is the 'KMSKS' region element. K622 contributes to the ATP binding site.

This sequence belongs to the class-I aminoacyl-tRNA synthetase family. IleS type 2 subfamily. In terms of assembly, monomer. Zn(2+) is required as a cofactor.

The protein resides in the cytoplasm. The catalysed reaction is tRNA(Ile) + L-isoleucine + ATP = L-isoleucyl-tRNA(Ile) + AMP + diphosphate. In terms of biological role, catalyzes the attachment of isoleucine to tRNA(Ile). As IleRS can inadvertently accommodate and process structurally similar amino acids such as valine, to avoid such errors it has two additional distinct tRNA(Ile)-dependent editing activities. One activity is designated as 'pretransfer' editing and involves the hydrolysis of activated Val-AMP. The other activity is designated 'posttransfer' editing and involves deacylation of mischarged Val-tRNA(Ile). The protein is Isoleucine--tRNA ligase of Nocardia farcinica (strain IFM 10152).